The following is a 614-amino-acid chain: Probable ATP-dependent RNA helicase DDX5 (614 aa).

Residues methionine 1–glycine 15 are compositionally biased toward basic and acidic residues. The disordered stretch occupies residues methionine 1–glutamate 39. Serine 24 is modified (phosphoserine). Position 32 is an N6-acetyllysine; alternate (lysine 32). Lysine 32 participates in a covalent cross-link: Glycyl lysine isopeptide (Lys-Gly) (interchain with G-Cter in SUMO2); alternate. N6-acetyllysine occurs at positions 33 and 40. Lysine 45 is covalently cross-linked (Glycyl lysine isopeptide (Lys-Gly) (interchain with G-Cter in SUMO2)). Lysine 53 participates in a covalent cross-link: Glycyl lysine isopeptide (Lys-Gly) (interchain with G-Cter in SUMO2); alternate. Lysine 53 is covalently cross-linked (Glycyl lysine isopeptide (Lys-Gly) (interchain with G-Cter in SUMO); alternate). Lysine 53 is covalently cross-linked (Glycyl lysine isopeptide (Lys-Gly) (interchain with G-Cter in SUMO1); alternate). Residues leucine 94–alanine 122 carry the Q motif motif. ATP-binding positions include phenylalanine 114–glutamate 116, glutamine 121, and alanine 138–threonine 145. One can recognise a Helicase ATP-binding domain in the interval tryptophan 125–isoleucine 300. Lysine 236 carries the N6-acetyllysine modification. Positions aspartate 248 to aspartate 251 match the DEAD box motif. Tyrosine 297 carries the phosphotyrosine modification. A Helicase C-terminal domain is found at lysine 328–valine 475. Residues lysine 340, lysine 343, lysine 388, lysine 391, lysine 411, lysine 437, lysine 451, and lysine 470 each participate in a glycyl lysine isopeptide (Lys-Gly) (interchain with G-Cter in SUMO2) cross-link. Positions aspartate 477–glycine 504 are disordered. The interval aspartate 477–glutamine 614 is transactivation domain. Residue serine 480 is modified to Phosphoserine. The span at glycine 488–serine 498 shows a compositional bias: basic and acidic residues. At serine 520 the chain carries Phosphoserine. Lysine 523 participates in a covalent cross-link: Glycyl lysine isopeptide (Lys-Gly) (interchain with G-Cter in SUMO2).

The protein belongs to the DEAD box helicase family. DDX5/DBP2 subfamily. Identified in the spliceosome C complex. Component of a ribonucleoprotein complex containing mRNAs and RNA-binding proteins including DDX5, HNRNPH2 and SRSF1 as well as splicing regulator ARVCF. Interacts with RBM4; the interaction occurs in an RNA-independent manner. Interacts with AGO1 and AGO2. Interacts with ESR1, AR, EP300, CREBBP, POLR2A, TP53, RUNX2 and HDAC1. Self-associates. Interacts with DDX17. Interacts with BRDT. The large PER complex involved in the repression of transcriptional termination is composed of at least PER2, CDK9, DDX5, DHX9, NCBP1 and POLR2A (active). Interacts with DHX36; this interaction occurs in a RNA-dependent manner. Interacts with NUPR1. Interacts with ERCC6. Interacts with DDX3X in the cytoplasm; this interaction may be more efficient when both proteins are unphosphorylated. Arg-502 is dimethylated, probably to asymmetric dimethylarginine. In terms of processing, sumoylated; sumoylation, promoted by PIAS1, promotes interaction with HDAC1 and transcriptional repression activity. Sumoylation also significantly increases stability, and reduces polyubiquitination. Post-translationally, polyubiquitinated, leading to proteasomal degradation. Weakly phosphorylated in the G1/S phase of the cell cycle and much more at G2/M, especially at Thr and Tyr residues.

It is found in the nucleus. The protein resides in the nucleolus. Its subcellular location is the nucleus speckle. It localises to the cytoplasm. It catalyses the reaction ATP + H2O = ADP + phosphate + H(+). Its function is as follows. Involved in the alternative regulation of pre-mRNA splicing; its RNA helicase activity is necessary for increasing tau exon 10 inclusion and occurs in a RBM4-dependent manner. Binds to the tau pre-mRNA in the stem-loop region downstream of exon 10. The rate of ATP hydrolysis is highly stimulated by single-stranded RNA. Involved in transcriptional regulation; the function is independent of the RNA helicase activity. Transcriptional coactivator for androgen receptor AR but probably not ESR1. Synergizes with DDX17 and SRA1 RNA to activate MYOD1 transcriptional activity and involved in skeletal muscle differentiation. Transcriptional coactivator for p53/TP53 and involved in p53/TP53 transcriptional response to DNA damage and p53/TP53-dependent apoptosis. Transcriptional coactivator for RUNX2 and involved in regulation of osteoblast differentiation. Acts as a transcriptional repressor in a promoter-specific manner; the function probably involves association with histone deacetylases, such as HDAC1. As component of a large PER complex is involved in the inhibition of 3' transcriptional termination of circadian target genes such as PER1 and NR1D1 and the control of the circadian rhythms. In Homo sapiens (Human), this protein is Probable ATP-dependent RNA helicase DDX5 (DDX5).